We begin with the raw amino-acid sequence, 329 residues long: Bile salt hydrolase/transferase (329 aa).

Cysteine 2 acts as the Nucleophile; acyl-thioester intermediate in catalysis. The deoxycholate site is built by cysteine 2 and arginine 18. Asparagine 82 contacts taurine.

It belongs to the peptidase C59 family. In terms of assembly, homotetramer. The tetramer consists of a dimer of dimers.

It catalyses the reaction glycocholate + H2O = cholate + glycine. The enzyme catalyses cholate + taurine = taurocholate + H2O. The catalysed reaction is taurodeoxycholate + H2O = deoxycholate + taurine. It carries out the reaction glycodeoxycholate + H2O = deoxycholate + glycine. It catalyses the reaction chenodeoxycholate + glycine = glycochenodeoxycholate + H2O. The enzyme catalyses taurochenodeoxycholate + H2O = chenodeoxycholate + taurine. The catalysed reaction is an L-alpha-amino acid + cholate = an N-choloyl-L-alpha-amino acid + H2O. It carries out the reaction an L-alpha-amino acid + taurocholate = an N-choloyl-L-alpha-amino acid + taurine. It catalyses the reaction glycocholate + an L-alpha-amino acid = an N-choloyl-L-alpha-amino acid + glycine. The enzyme catalyses cholate + L-histidine = L-histidocholate + H2O. The catalysed reaction is taurocholate + L-histidine = L-histidocholate + taurine. It carries out the reaction glycocholate + L-histidine = L-histidocholate + glycine. It catalyses the reaction cholate + L-arginine = L-arginocholate + H2O. The enzyme catalyses taurocholate + L-arginine = L-arginocholate + taurine. The catalysed reaction is glycocholate + L-arginine = L-arginocholate + glycine. It carries out the reaction cholate + L-phenylalanine = L-phenylalanocholate + H2O. It catalyses the reaction taurocholate + L-phenylalanine = L-phenylalanocholate + taurine. It functions in the pathway lipid metabolism; bile acid biosynthesis. Possesses dual functions in bile acid metabolism. Acts as a bile salt hydrolase that catalyzes the deconjugation of glycine- and taurine-linked bile salts, which occurs naturally in the intestines of humans, releasing amino acid residues and deconjugated bile salts (bile acids). Can hydrolyze the amide bond in major human conjugated bile salts, such as glycocholate (GCA), taurocholate (TCA) and taurodeoxycholate (TDCA). Shows a slight preference for taurine-conjugated bile acids as substrates. Also acts as an amine N-acyltransferase that conjugates a wide variety of amino acids to conjugated and non-conjugated bile acids, thus producing bacterial bile acid amidates (BBAAs) - also named microbially conjugated bile acids (MCBAs) - in the gastrointestinal tract. These BBAAs may facilitate communication between the microbiota and host through the activation of human ligand-activated transcription factors. The polypeptide is Bile salt hydrolase/transferase (cbh) (Clostridium perfringens (strain 13 / Type A)).